Consider the following 549-residue polypeptide: Frizzled-7-A (549 aa).

Positions 1 to 22 (MSSTVSLLFCCLFLQLCPSAQQ) are cleaved as a signal peptide. The Extracellular portion of the chain corresponds to 23 to 231 (YHGEKGISVP…EEEVRFARLW (209 aa)). An FZ domain is found at 32-151 (PDHGFCQPIS…HGAGEICVGQ (120 aa)). Cystine bridges form between cysteine 37–cysteine 98, cysteine 45–cysteine 91, cysteine 82–cysteine 119, cysteine 108–cysteine 148, and cysteine 112–cysteine 136. Asparagine 51 carries N-linked (GlcNAc...) asparagine glycosylation. Residue asparagine 152 is glycosylated (N-linked (GlcNAc...) asparagine). A helical transmembrane segment spans residues 232 to 252 (VGIWAILCCISTLFTVLTYLV). Residues 253–263 (DMRRFSYPERP) are Cytoplasmic-facing. A helical membrane pass occupies residues 264–284 (IIFLSGCYFMVAVAYTAGFLL). The Extracellular portion of the chain corresponds to 285–311 (EERAVCVERFSEDSYRTVAQGTKKEGC). A helical transmembrane segment spans residues 312–332 (TILFMILYFFGMASSIWWVIL). The Cytoplasmic portion of the chain corresponds to 333-354 (SLTWFLSAGMKWGHEAIEANSQ). The helical transmembrane segment at 355–375 (YFHLAAWAVPAVKTITILAMG) threads the bilayer. Topologically, residues 376–398 (QVDGDVLSGVCYVGINSVDSLRG) are extracellular. The helical transmembrane segment at 399–419 (FVLAPLFVYLFIGTSFLLAGF) threads the bilayer. Residues 420 to 445 (VSLFRIRTIMKHDGTKTEKLEKLMVR) are Cytoplasmic-facing. A helical membrane pass occupies residues 446–466 (IGVFSVMYTVPATIVLACYFY). At 467-503 (EQAFRDTWEKTWLVQTCKGYAVPCPNYNFAPMSPDFT) the chain is on the extracellular side. The helical transmembrane segment at 504–524 (VFMIKYLMTMIVGITSSFWIW) threads the bilayer. At 525–549 (SGKTLQSWRRFYHRLSNGSKGETAV) the chain is on the cytoplasmic side. The Lys-Thr-X-X-X-Trp motif, mediates interaction with the PDZ domain of Dvl family members signature appears at 527-532 (KTLQSW). A PDZ-binding motif is present at residues 547 to 549 (TAV).

It belongs to the G-protein coupled receptor Fz/Smo family. As to quaternary structure, interacts with wnt11 and sdc4. The extracellular domain interacts with the extracellular domain of pcdh8/papc. In terms of tissue distribution, expressed in the animal region of cleavage stage embryos. During gastrulation, broadly expressed on the dorsal side of the embryo in deep mesodermal cells surrounding the blastopore lip and in presumptive anterior neuroectoderm. During neurulation, becomes progressively more restricted to the dorsal epidermis, neural plate, and neural tube. Expressed in the cranial neural crest of neurulae and tailbud embryos as well as the pronephros of tailbud embryos. Localized to the brain of neurulae, tailbud embryos and tadpoles. In tadpoles, strongly expressed in the eye and developing heart.

Its subcellular location is the cell membrane. It is found in the endosome membrane. Its function is as follows. Receptor for Wnt proteins. Acts in both canonical and non-canonical Wnt pathways. Although different papers report differing Wnt preferences, wnt5a, wnt8b and wnt11 have been proposed as synergists. In the canonical Wnt pathway, acts via beta-catenin to promote the expression of the dorsal genes siamois, twin and nodal3 and to establish the dorsal axis of the embryo and induce dorsal mesoderm formation. In a non-canonical Wnt/planar cell polarity (PCP) pathway, acts with sdc4 and dvl2/dsh to regulate convergent extension cell movements during gastrulation. Triggers phosphorylation of dvl2/dsh and its translocation to the plasma membrane. In a third branch of Wnt signaling, acts in a non-canonical pathway via trimeric G proteins, and independently of dvl2/dsh, to recruit protein kinase C (PKC) to the membrane and thus activate PKC. PKC signaling controls cell sorting and tissue separation during gastrulation. The chain is Frizzled-7-A (fzd7-a) from Xenopus laevis (African clawed frog).